The primary structure comprises 399 residues: Methylthioribose kinase (399 aa).

Residues Asn40, Lys57, and 111–113 contribute to the ATP site; that span reads EDL. Substrate is bound at residue Asp229. Residue 246–248 coordinates ATP; that stretch reads DAE. Arg344 serves as a coordination point for substrate.

Belongs to the methylthioribose kinase family. As to quaternary structure, homodimer.

The enzyme catalyses 5-(methylsulfanyl)-D-ribose + ATP = 5-(methylsulfanyl)-alpha-D-ribose 1-phosphate + ADP + H(+). It functions in the pathway amino-acid biosynthesis; L-methionine biosynthesis via salvage pathway; S-methyl-5-thio-alpha-D-ribose 1-phosphate from S-methyl-5'-thioadenosine (hydrolase route): step 2/2. Functionally, catalyzes the phosphorylation of methylthioribose into methylthioribose-1-phosphate. This Yersinia enterocolitica serotype O:8 / biotype 1B (strain NCTC 13174 / 8081) protein is Methylthioribose kinase.